Consider the following 383-residue polypeptide: Succinyl-diaminopimelate desuccinylase (383 aa).

Residue His73 participates in Zn(2+) binding. Asp75 is a catalytic residue. Residue Asp107 coordinates Zn(2+). The active-site Proton acceptor is the Glu141. Glu142, Glu170, and His356 together coordinate Zn(2+).

This sequence belongs to the peptidase M20A family. DapE subfamily. In terms of assembly, homodimer. It depends on Zn(2+) as a cofactor. Co(2+) serves as cofactor.

The enzyme catalyses N-succinyl-(2S,6S)-2,6-diaminopimelate + H2O = (2S,6S)-2,6-diaminopimelate + succinate. The protein operates within amino-acid biosynthesis; L-lysine biosynthesis via DAP pathway; LL-2,6-diaminopimelate from (S)-tetrahydrodipicolinate (succinylase route): step 3/3. Its function is as follows. Catalyzes the hydrolysis of N-succinyl-L,L-diaminopimelic acid (SDAP), forming succinate and LL-2,6-diaminopimelate (DAP), an intermediate involved in the bacterial biosynthesis of lysine and meso-diaminopimelic acid, an essential component of bacterial cell walls. The polypeptide is Succinyl-diaminopimelate desuccinylase (Pseudomonas paraeruginosa (strain DSM 24068 / PA7) (Pseudomonas aeruginosa (strain PA7))).